A 236-amino-acid chain; its full sequence is Zinc finger AN1 domain-containing stress-associated protein 13 (236 aa).

2 disordered regions span residues 48–81 and 150–173; these read KEGRSGGGGGSEGQRTDSRLQLPTTSIVDSPGKR and TVPEGIPVDEGAMPPPPPPRAKTK. Polar residues predominate over residues 66 to 75; it reads RLQLPTTSIV. The AN1-type; degenerate zinc-finger motif lies at 170–216; sequence AKTKSRCAACGRRVGLMGFECRCGAVFCGAHPLLGQARLWLRLQGRA. Cysteine 176, cysteine 179, cysteine 197, and histidine 200 together coordinate Zn(2+).

Functionally, may be involved in environmental stress response. The sequence is that of Zinc finger AN1 domain-containing stress-associated protein 13 (SAP13) from Oryza sativa subsp. japonica (Rice).